We begin with the raw amino-acid sequence, 506 residues long: Trans-cinnamate 4-monooxygenase (506 aa).

A helical transmembrane segment spans residues 3–23 (LLLLEKALLGLFAAAVVAIAV). (E)-cinnamate is bound by residues 213 to 218 (RSRLAQ) and alanine 306. Heme is bound at residue cysteine 447.

Belongs to the cytochrome P450 family. The cofactor is heme.

It localises to the membrane. The catalysed reaction is (E)-cinnamate + reduced [NADPH--hemoprotein reductase] + O2 = (E)-4-coumarate + oxidized [NADPH--hemoprotein reductase] + H2O + H(+). Its pathway is phenylpropanoid metabolism; trans-4-coumarate biosynthesis; trans-4-coumarate from trans-cinnamate: step 1/1. In terms of biological role, catalyzes the first oxidative step of the phenylpropanoid pathway in higher plants by transforming trans-cinnamate into p-coumarate. The compounds formed by this pathway are essential components for lignification, pollination, and defense against ultraviolet light, predators and pathogens. The polypeptide is Trans-cinnamate 4-monooxygenase (CYP73A2) (Ruta graveolens (Common rue)).